The chain runs to 894 residues: Protein translocase subunit SecA (894 aa).

ATP-binding positions include Q87, 105 to 109 (GEGKT), and D512. The interval 857–894 (FNLGDEPEAQQPVTSKKVGRNEPCPCGSGKKYKQCCGK) is disordered. Zn(2+) contacts are provided by C880, C882, C891, and C892.

This sequence belongs to the SecA family. As to quaternary structure, monomer and homodimer. Part of the essential Sec protein translocation apparatus which comprises SecA, SecYEG and auxiliary proteins SecDF-YajC and YidC. Zn(2+) is required as a cofactor.

It localises to the cell inner membrane. It is found in the cytoplasm. It catalyses the reaction ATP + H2O + cellular proteinSide 1 = ADP + phosphate + cellular proteinSide 2.. Its function is as follows. Part of the Sec protein translocase complex. Interacts with the SecYEG preprotein conducting channel. Has a central role in coupling the hydrolysis of ATP to the transfer of proteins into and across the cell membrane, serving as an ATP-driven molecular motor driving the stepwise translocation of polypeptide chains across the membrane. The protein is Protein translocase subunit SecA of Geotalea uraniireducens (strain Rf4) (Geobacter uraniireducens).